The following is a 998-amino-acid chain: Type II restriction enzyme and methyltransferase RM.Eco57I (998 aa).

This sequence in the C-terminal section; belongs to the N(4)/N(6)-methyltransferase family. Monomer.

The catalysed reaction is Endonucleolytic cleavage of DNA to give specific double-stranded fragments with terminal 5'-phosphates.. It carries out the reaction a 2'-deoxyadenosine in DNA + S-adenosyl-L-methionine = an N(6)-methyl-2'-deoxyadenosine in DNA + S-adenosyl-L-homocysteine + H(+). Its activity is regulated as follows. Mg(2+) is absolutely required for DNA restriction. Functionally, an E, G and S subtype restriction enzyme that recognizes the (non-palindromic) double-stranded sequence 5'-CTGAAG-3' and cleaves respectively 22 bases after C-1 and 14 bases before C'-1; cleavage of lambda DNA is never complete. Also acts as a methylase that causes specific methylation on A-5 in 5'-CTGAAG-3', the other strand is methylated by the M.Eco57I methylase. This Escherichia coli protein is Type II restriction enzyme and methyltransferase RM.Eco57I.